Here is a 78-residue protein sequence, read N- to C-terminus: uncharacterized protein (78 aa).

The next 2 membrane-spanning stretches (helical) occupy residues 20–40 and 57–77; these read SVYF…WLVV and LLMD…ILIA.

The protein localises to the cell membrane. This is an uncharacterized protein from Escherichia coli (strain K12).